Consider the following 483-residue polypeptide: Probable 4-hydroxyphenylacetate 3-monooxygenase (483 aa).

Substrate contacts are provided by residues 104 to 108 and His-150; that span reads RSPDY. FAD-binding positions include 150-152, 156-159, and Thr-193; these read HTF and QVNR. Position 206–207 (206–207) interacts with substrate; that stretch reads AP. FAD is bound at residue 452 to 455; it reads DPIR.

Belongs to the FADH(2)-utilizing monooxygenase family.

It carries out the reaction 4-hydroxyphenylacetate + FADH2 + O2 = 3,4-dihydroxyphenylacetate + FAD + H2O + H(+). Its pathway is aromatic compound metabolism; 4-hydroxyphenylacetate degradation; pyruvate and succinate semialdehyde from 4-hydroxyphenylacetate: step 1/7. Catalyzes the hydroxylation of 4-hydroxyphenylacetic acid (4HPA), leading to the production of 3,4-dihydroxyphenylacetic acid (DHPA). The protein is Probable 4-hydroxyphenylacetate 3-monooxygenase (yoaI) of Bacillus subtilis (strain 168).